The primary structure comprises 164 residues: ATP synthase subunit b 2 (164 aa).

A helical transmembrane segment spans residues T4–P24.

Belongs to the ATPase B chain family. In terms of assembly, F-type ATPases have 2 components, F(1) - the catalytic core - and F(0) - the membrane proton channel. F(1) has five subunits: alpha(3), beta(3), gamma(1), delta(1), epsilon(1). F(0) has three main subunits: a(1), b(2) and c(10-14). The alpha and beta chains form an alternating ring which encloses part of the gamma chain. F(1) is attached to F(0) by a central stalk formed by the gamma and epsilon chains, while a peripheral stalk is formed by the delta and b chains.

It localises to the cell inner membrane. In terms of biological role, f(1)F(0) ATP synthase produces ATP from ADP in the presence of a proton or sodium gradient. F-type ATPases consist of two structural domains, F(1) containing the extramembraneous catalytic core and F(0) containing the membrane proton channel, linked together by a central stalk and a peripheral stalk. During catalysis, ATP synthesis in the catalytic domain of F(1) is coupled via a rotary mechanism of the central stalk subunits to proton translocation. Its function is as follows. Component of the F(0) channel, it forms part of the peripheral stalk, linking F(1) to F(0). This Bartonella tribocorum (strain CIP 105476 / IBS 506) protein is ATP synthase subunit b 2.